The following is a 76-amino-acid chain: Exodeoxyribonuclease 7 small subunit (76 aa).

Belongs to the XseB family. In terms of assembly, heterooligomer composed of large and small subunits.

The protein resides in the cytoplasm. The catalysed reaction is Exonucleolytic cleavage in either 5'- to 3'- or 3'- to 5'-direction to yield nucleoside 5'-phosphates.. Bidirectionally degrades single-stranded DNA into large acid-insoluble oligonucleotides, which are then degraded further into small acid-soluble oligonucleotides. The polypeptide is Exodeoxyribonuclease 7 small subunit (Geobacillus thermodenitrificans (strain NG80-2)).